A 186-amino-acid polypeptide reads, in one-letter code: Cytochrome c oxidase subunit 4, mitochondrial (186 aa).

Residues 1 to 31 (MLLSRTAVAVARRATAAPALRRSIATTVVRC) constitute a mitochondrion transit peptide. Residues Cys118, His126, Cys142, and Cys145 each coordinate Zn(2+).

This sequence belongs to the cytochrome c oxidase subunit 5B family. In terms of assembly, component of the cytochrome c oxidase (complex IV, CIV), a multisubunit enzyme composed of 11 subunits. The complex is composed of a catalytic core of 3 subunits Cox1, Cox2 and Cox3, encoded in the mitochondrial DNA, and 8 supernumerary subunits Cox4, Cox5a/Cox5, Cox6, Cox7, Cox8, Cox7a/Cox9, Cox6b/Cox12 and Cox6a/Cox13, which are encoded in the nuclear genome. The complex exists as a monomer or a dimer and forms respiratory supercomplexes (SCs) in the inner mitochondrial membrane with NADH-ubiquinone oxidoreductase (complex I, CI) and ubiquinol-cytochrome c oxidoreductase (cytochrome b-c1 complex, complex III, CIII), resulting in various different assemblies (supercomplexes I(1)IV(1), I(1)III(3)IV(2), III(2)IV(1) and III(2)IV(2) as well as larger supercomplexes of compositions like I(1)III(2)IV(5-6)).

Its subcellular location is the mitochondrion inner membrane. It functions in the pathway energy metabolism; oxidative phosphorylation. Its function is as follows. Component of the cytochrome c oxidase, the last enzyme in the mitochondrial electron transport chain which drives oxidative phosphorylation. The respiratory chain contains 3 multisubunit complexes succinate dehydrogenase (complex II, CII), ubiquinol-cytochrome c oxidoreductase (cytochrome b-c1 complex, complex III, CIII) and cytochrome c oxidase (complex IV, CIV), that cooperate to transfer electrons derived from NADH and succinate to molecular oxygen, creating an electrochemical gradient over the inner membrane that drives transmembrane transport and the ATP synthase. Cytochrome c oxidase is the component of the respiratory chain that catalyzes the reduction of oxygen to water. Electrons originating from reduced cytochrome c in the intermembrane space (IMS) are transferred via the dinuclear copper A center (CU(A)) of Cox2 and heme A of Cox1 to the active site in Cox1, a binuclear center (BNC) formed by heme A3 and copper B (CU(B)). The BNC reduces molecular oxygen to 2 water molecules using 4 electrons from cytochrome c in the IMS and 4 protons from the mitochondrial matrix. This Neurospora crassa (strain ATCC 24698 / 74-OR23-1A / CBS 708.71 / DSM 1257 / FGSC 987) protein is Cytochrome c oxidase subunit 4, mitochondrial (cox-4).